The primary structure comprises 334 residues: Tetratricopeptide repeat protein 24 (334 aa).

TPR repeat units follow at residues 35-68 (GPFY…CRQP), 72-105 (ATVL…HGSV), 112-145 (GRSF…AQDT), and 152-185 (WQAC…CQHE). Residues 220–258 (PGKLQTSRKAKTSARVQSSAEDAQESQWEGEASEGGHEK) form a disordered region. Residues 233 to 246 (ARVQSSAEDAQESQ) are compositionally biased toward polar residues.

The sequence is that of Tetratricopeptide repeat protein 24 (Ttc24) from Mus musculus (Mouse).